The following is a 1235-amino-acid chain: Chitin synthase 4 (1235 aa).

A compositionally biased stretch (pro residues) spans 1 to 11 (MSLPRRPGPSP). The segment at 1–203 (MSLPRRPGPS…ASKGKREKSG (203 aa)) is disordered. At 1–212 (MSLPRRPGPS…GGLPTPSFWN (212 aa)) the chain is on the cytoplasmic side. A compositionally biased stretch (basic residues) spans 19–28 (YRQSGSRRSR). Residues 46–59 (PSQQQRVPSISSFP) are compositionally biased toward polar residues. Residues 94–107 (IRPERNRIGKDHPN) are compositionally biased toward basic and acidic residues. Polar residues predominate over residues 116 to 125 (NMNTLPSSTG). The segment covering 169–187 (ETEKSGDERRRRRKSDTTK) has biased composition (basic and acidic residues). Basic residues predominate over residues 188–199 (HGKIVKASKGKR). The chain crosses the membrane as a helical span at residues 213–233 (IYCGFVTFWCPGFVLKCFGMP). Over 234–244 (EMAQQRAWREK) the chain is Extracellular. The helical transmembrane segment at 245 to 265 (MGLISIILLIMGFVGFITFGF) threads the bilayer. At 266–514 (TQVVCGKPPL…ASKVVLYVSL (249 aa)) the chain is on the cytoplasmic side. Residues 515-535 (VLILAVVLARFVLALIFQWFI) traverse the membrane as a helical segment. The Extracellular segment spans residues 536–1065 (SKTYAAAKTS…SMQFIVGIEL (530 aa)). Residues 545–592 (SQTSDQRKRNRQIEDWTEDIYRAPPRLPGEVGSSVAGSSDRQSKRSSA) are disordered. A compositionally biased stretch (basic and acidic residues) spans 549–558 (DQRKRNRQIE). N-linked (GlcNAc...) asparagine glycosylation is present at asparagine 639. Residues 645–670 (FLKSDAYGSSSSPADGPGPAGFIHEA) are disordered. Low complexity predominate over residues 648-665 (SDAYGSSSSPADGPGPAG). An N-linked (GlcNAc...) asparagine glycan is attached at asparagine 1034. A helical transmembrane segment spans residues 1066–1086 (IGTLVLPAAIAFTFYVVIISI). The Cytoplasmic segment spans residues 1087–1092 (INSPPQ). Residues 1093–1113 (IIPLVLLGLILGLPAILVVVT) traverse the membrane as a helical segment. Over 1114–1116 (AHS) the chain is Extracellular. The helical transmembrane segment at 1117–1137 (WSYIIWMFIYLLSLPVWNFVL) threads the bilayer. The Cytoplasmic segment spans residues 1138–1235 (PTYAFWKFDD…RHFDDYFSDA (98 aa)). Residues 1201–1235 (RDNVISGVGGSNGWGSSQPRGHEQGRHFDDYFSDA) are disordered. Over residues 1220–1235 (RGHEQGRHFDDYFSDA) the composition is skewed to basic and acidic residues.

Belongs to the chitin synthase family. Class IV subfamily.

The protein resides in the cell membrane. It carries out the reaction [(1-&gt;4)-N-acetyl-beta-D-glucosaminyl](n) + UDP-N-acetyl-alpha-D-glucosamine = [(1-&gt;4)-N-acetyl-beta-D-glucosaminyl](n+1) + UDP + H(+). In terms of biological role, polymerizes chitin, a structural polymer of the cell wall and septum, by transferring the sugar moiety of UDP-GlcNAc to the non-reducing end of the growing chitin polymer. This is Chitin synthase 4 (chs-4) from Neurospora crassa (strain ATCC 24698 / 74-OR23-1A / CBS 708.71 / DSM 1257 / FGSC 987).